A 979-amino-acid polypeptide reads, in one-letter code: Collagen alpha-2(I) chain (979 aa).

The tract at residues 1–979 (SGGFDFSFLP…FGYEGDFYRA (979 aa)) is disordered. 4-hydroxyproline is present on residues P10, P13, P38, and P44. The span at 24-70 (LGPGPMGLMGPRGPPGASGAPGPQGFQGPAGEPGEPGQTGPAGARGP) shows a compositional bias: low complexity. Position 99 is a 5-hydroxylysine; alternate (K99). A glycan (O-linked (Gal...) hydroxylysine; alternate) is linked at K99. 4 stretches are compositionally biased toward low complexity: residues 147-176 (VGAPGPAGARGSDGSVGPVGPAGPIGSAGP), 222-263 (PGAN…AGSK), 272-282 (SAGPQGPPGSS), and 312-331 (RAGVIGPAGARGASGPAGVR). 4-hydroxyproline occurs at positions 334 and 337. A compositionally biased stretch (low complexity) spans 363-382 (LPGIDGRPGPIGPAGARGEA). Positions 427–436 (GVQGGKGEQG) are enriched in gly residues. Positions 483-500 (PGESGAVGPSGAIGSRGP) are enriched in low complexity. A compositionally biased stretch (gly residues) spans 517–527 (GAPGGSGGLPG). Low complexity-rich tracts occupy residues 550–594 (VGTT…PRGS) and 601–621 (VGPAGPNGFAGPAGAAGQPGA). Over residues 622–631 (KGERGTKGPK) the composition is skewed to basic and acidic residues. Residues 639–649 (PTGPVGSAGPA) are compositionally biased toward low complexity. The span at 659–668 (GSRGDGGPPG) shows a compositional bias: gly residues. The span at 669 to 679 (ATGFPGAAGRT) shows a compositional bias: low complexity. Positions 710–724 (GPVGRGETGAGGPPG) are enriched in gly residues. Low complexity-rich tracts occupy residues 725–759 (FTGEKGPSGEPGTAGPPGTAGPQGLLGAPGILGLP) and 767–777 (LPGVAGAVGEP). Residues 778 to 788 (GPLGIGPPGAR) show a composition bias toward gly residues. Low complexity predominate over residues 840 to 855 (EPGPVGSVGPVGALGP). Residues 865–876 (RGDKGEPGDKGP) show a composition bias toward basic and acidic residues. Positions 949–961 (SGPPGPPGPPGPP) are enriched in pro residues.

It belongs to the fibrillar collagen family. In terms of assembly, trimers of one alpha 2(I) and two alpha 1(I) chains. Interacts (via C-terminus) with TMEM131 (via PapD-L domain); the interaction is direct and is involved in assembly and TRAPPIII ER-to-Golgi transport complex-dependent secretion of collagen. In terms of processing, prolines at the third position of the tripeptide repeating unit (G-X-Y) are hydroxylated in some or all of the chains. As to expression, expressed in bones.

It is found in the secreted. The protein resides in the extracellular space. Its subcellular location is the extracellular matrix. Type I collagen is a member of group I collagen (fibrillar forming collagen). The sequence is that of Collagen alpha-2(I) chain from Bradypus variegatus (Brown-throated three-fingered sloth).